A 273-amino-acid polypeptide reads, in one-letter code: 1,4-dihydroxy-2-naphthoyl-CoA synthase (273 aa).

Substrate-binding positions include arginine 34, 73 to 77 (SGGDQ), tyrosine 85, 117 to 121 (YAVGG), threonine 143, serine 149, tyrosine 246, and lysine 261. 142–144 (QTG) contacts hydrogencarbonate. Basic and acidic residues predominate over residues 254–265 (GRDAFKEKRDPD). Residues 254–273 (GRDAFKEKRDPDFDQFPKFP) are disordered.

It belongs to the enoyl-CoA hydratase/isomerase family. MenB subfamily. Requires hydrogencarbonate as cofactor.

The catalysed reaction is 2-succinylbenzoyl-CoA + H(+) = 1,4-dihydroxy-2-naphthoyl-CoA + H2O. It participates in quinol/quinone metabolism; 1,4-dihydroxy-2-naphthoate biosynthesis; 1,4-dihydroxy-2-naphthoate from chorismate: step 6/7. It functions in the pathway quinol/quinone metabolism; menaquinone biosynthesis. Functionally, converts o-succinylbenzoyl-CoA (OSB-CoA) to 1,4-dihydroxy-2-naphthoyl-CoA (DHNA-CoA). The sequence is that of 1,4-dihydroxy-2-naphthoyl-CoA synthase from Staphylococcus aureus (strain Mu50 / ATCC 700699).